Reading from the N-terminus, the 161-residue chain is Urease accessory protein UreE (161 aa).

Residues 138 to 161 (RGAYHAHGGHSHDHGQGHHHHDHG) are disordered.

This sequence belongs to the UreE family.

Its subcellular location is the cytoplasm. Its function is as follows. Involved in urease metallocenter assembly. Binds nickel. Probably functions as a nickel donor during metallocenter assembly. The protein is Urease accessory protein UreE of Agrobacterium fabrum (strain C58 / ATCC 33970) (Agrobacterium tumefaciens (strain C58)).